We begin with the raw amino-acid sequence, 194 residues long: Probable GTP-binding protein EngB (194 aa).

Positions 22-194 (LFLEVAFAGR…WQELDTMLNP (173 aa)) constitute an EngB-type G domain. GTP-binding positions include 30–37 (GRSNVGKS), 57–61 (GCTQL), 75–78 (DLPG), 142–145 (TKAD), and 173–175 (FSS). Residues S37 and T59 each coordinate Mg(2+).

Belongs to the TRAFAC class TrmE-Era-EngA-EngB-Septin-like GTPase superfamily. EngB GTPase family. It depends on Mg(2+) as a cofactor.

Its function is as follows. Necessary for normal cell division and for the maintenance of normal septation. The polypeptide is Probable GTP-binding protein EngB (Desulforapulum autotrophicum (strain ATCC 43914 / DSM 3382 / VKM B-1955 / HRM2) (Desulfobacterium autotrophicum)).